Consider the following 144-residue polypeptide: Large ribosomal subunit protein uL15 (144 aa).

The disordered stretch occupies residues 1 to 48; that stretch reads MIKLESLQDPSPRKRRTKLLGRGPSSGHGKTSCRGHKGDGSRSGYKRR.

The protein belongs to the universal ribosomal protein uL15 family. As to quaternary structure, part of the 50S ribosomal subunit.

Binds to the 23S rRNA. The polypeptide is Large ribosomal subunit protein uL15 (Chlamydia caviae (strain ATCC VR-813 / DSM 19441 / 03DC25 / GPIC) (Chlamydophila caviae)).